The primary structure comprises 117 residues: MRDWRWMLLVLALLLGWLQYRFWFGPGNSGEVMMLEAQVTNQERDNEGLQQRNDALAAEVKDLKEGQSAIEERARSELGMIKPGEKFYRVVEDAPVHPVQPAAGVSAQVGEHPADVP.

Over 1–6 the chain is Cytoplasmic; it reads MRDWRW. The helical transmembrane segment at 7 to 24 threads the bilayer; the sequence is MLLVLALLLGWLQYRFWF. Residues 25–117 are Periplasmic-facing; it reads GPGNSGEVMM…QVGEHPADVP (93 aa). Positions 29-69 form a coiled coil; the sequence is SGEVMMLEAQVTNQERDNEGLQQRNDALAAEVKDLKEGQSA.

Belongs to the FtsB family. Part of a complex composed of FtsB, FtsL and FtsQ.

Its subcellular location is the cell inner membrane. Essential cell division protein. May link together the upstream cell division proteins, which are predominantly cytoplasmic, with the downstream cell division proteins, which are predominantly periplasmic. This Stenotrophomonas maltophilia (strain R551-3) protein is Cell division protein FtsB.